The primary structure comprises 547 residues: uncharacterized protein (547 aa).

The segment covering methionine 1–serine 18 has biased composition (polar residues). 2 disordered regions span residues methionine 1 to proline 41 and proline 80 to glutamine 165. 2 stretches are compositionally biased toward low complexity: residues glutamine 19 to glutamine 29 and proline 83 to tyrosine 94. The span at valine 121 to proline 135 shows a compositional bias: pro residues. Polar residues predominate over residues lysine 136–glycine 160. A DNA-binding region (zn(2)-C6 fungal-type) is located at residues cysteine 174–cysteine 201.

It localises to the nucleus. This is an uncharacterized protein from Schizosaccharomyces pombe (strain 972 / ATCC 24843) (Fission yeast).